The chain runs to 294 residues: 33 kDa chaperonin (294 aa).

2 cysteine pairs are disulfide-bonded: C238/C240 and C271/C274.

It belongs to the HSP33 family. Under oxidizing conditions two disulfide bonds are formed involving the reactive cysteines. Under reducing conditions zinc is bound to the reactive cysteines and the protein is inactive.

The protein resides in the cytoplasm. In terms of biological role, redox regulated molecular chaperone. Protects both thermally unfolding and oxidatively damaged proteins from irreversible aggregation. Plays an important role in the bacterial defense system toward oxidative stress. This is 33 kDa chaperonin from Clostridium tetani (strain Massachusetts / E88).